The following is a 312-amino-acid chain: Olfactory receptor 2T8 (312 aa).

Topologically, residues Met-1 to Phe-26 are extracellular. 2 N-linked (GlcNAc...) asparagine glycosylation sites follow: Asn-3 and Asn-17. A helical transmembrane segment spans residues Met-27–Ile-47. Residues His-48–Thr-55 are Cytoplasmic-facing. Residues Pro-56–Val-76 traverse the membrane as a helical segment. Residues Pro-77–Gly-96 are Extracellular-facing. A disulfide bridge links Cys-95 with Cys-177. The helical transmembrane segment at Ala-97–Ala-117 threads the bilayer. Residues Tyr-118 to Asn-143 lie on the Cytoplasmic side of the membrane. The chain crosses the membrane as a helical span at residues Leu-144 to Phe-164. The Extracellular segment spans residues Pro-165–Cys-201. The chain crosses the membrane as a helical span at residues Val-202–Ala-222. Residues Val-223 to Lys-234 are Cytoplasmic-facing. A helical transmembrane segment spans residues Ala-235–Phe-255. Residues Thr-256–Asp-269 are Extracellular-facing. The helical transmembrane segment at Lys-270 to Val-290 threads the bilayer. At Lys-291 to Glu-312 the chain is on the cytoplasmic side.

Belongs to the G-protein coupled receptor 1 family.

It localises to the cell membrane. Functionally, odorant receptor. The polypeptide is Olfactory receptor 2T8 (OR2T8) (Homo sapiens (Human)).